We begin with the raw amino-acid sequence, 453 residues long: MELSPQDLWTQVLERLQSRLPRPAFDTWIGTAKIEQLTPQYLVICAANPFILNHLQKNYLQIIADVVEEILGYSIDIQLTSTQGENIAIVGETQVSAYYPTLSGEHPKPIKLNPKYTFSRFVVGSNNRLAHAATLAVAESPGREFNPLFLCGGVGLGKTHLMQAIAHYRLQMYPDSKVFYVSTEQFTNDLITAIRQDSLQSFREHYRTADILLVDDIQFIEGKEYTQEEFFHTFNTLHEAGKQVVIASDRPPKQIPTLEDRLISRFSMGLIADIQVPDLETRMAILQKKAEYENMRLPREVIEYIATHYTSNIRELEGALIRAITYISISGLSMTVENLAPVLNPPVERGEVTPELILNIIAETYKVSVEDLKGNSRRREISLARQIGMYLMRQHTDLSLPRIGEEFGGKDHTTVMYSYDKINQLQKKDLDLSQTLSQLSDRIHLASRTQKTT.

A domain I, interacts with DnaA modulators region spans residues 1-73; sequence MELSPQDLWT…ADVVEEILGY (73 aa). The tract at residues 73-110 is domain II; the sequence is YSIDIQLTSTQGENIAIVGETQVSAYYPTLSGEHPKPI. The interval 111–327 is domain III, AAA+ region; it reads KLNPKYTFSR…GALIRAITYI (217 aa). Residues Gly155, Gly157, Lys158, and Thr159 each contribute to the ATP site. The interval 328-453 is domain IV, binds dsDNA; the sequence is SISGLSMTVE…HLASRTQKTT (126 aa).

It belongs to the DnaA family. Oligomerizes as a right-handed, spiral filament on DNA at oriC.

It is found in the cytoplasm. Its function is as follows. Plays an essential role in the initiation and regulation of chromosomal replication. ATP-DnaA binds to the origin of replication (oriC) to initiate formation of the DNA replication initiation complex once per cell cycle. Binds the DnaA box (a 9 base pair repeat at the origin) and separates the double-stranded (ds)DNA. Forms a right-handed helical filament on oriC DNA; dsDNA binds to the exterior of the filament while single-stranded (ss)DNA is stabiized in the filament's interior. The ATP-DnaA-oriC complex binds and stabilizes one strand of the AT-rich DNA unwinding element (DUE), permitting loading of DNA polymerase. After initiation quickly degrades to an ADP-DnaA complex that is not apt for DNA replication. Binds acidic phospholipids. This chain is Chromosomal replication initiator protein DnaA, found in Gloeothece citriformis (strain PCC 7424) (Cyanothece sp. (strain PCC 7424)).